The chain runs to 138 residues: Large ribosomal subunit protein bL17 (138 aa).

Belongs to the bacterial ribosomal protein bL17 family. In terms of assembly, part of the 50S ribosomal subunit. Contacts protein L32.

The sequence is that of Large ribosomal subunit protein bL17 from Methylorubrum populi (strain ATCC BAA-705 / NCIMB 13946 / BJ001) (Methylobacterium populi).